The chain runs to 347 residues: Ataxin-7-like protein 3 (347 aa).

The segment at 84–105 (CVCPNCSRSIAASRFAPHLEKC) adopts an SGF11-type zinc-finger fold. The span at 116-125 (ANRRIANSNN) shows a compositional bias: low complexity. The disordered stretch occupies residues 116–184 (ANRRIANSNN…GELSNSDPFK (69 aa)). Phosphoserine is present on residues Ser129 and Ser131. The segment covering 132 to 141 (DQEDNDDIND) has biased composition (acidic residues). In terms of domain architecture, SCA7 spans 196 to 263 (LGPEELRSLL…SLDNDGFDMT (68 aa)). A compositionally biased stretch (low complexity) spans 275–288 (DGSSDLSPSDSGSS). The disordered stretch occupies residues 275–347 (DGSSDLSPSD…PTPSIYDDIN (73 aa)). Ser278, Ser281, and Ser326 each carry phosphoserine.

This sequence belongs to the SGF11 family. As to quaternary structure, component of some SAGA transcription coactivator-HAT complexes, at least composed of ATXN7, ATXN7L3, ENY2, GCN5L2, SUPT3H, TAF10, TRRAP and USP22. Within the SAGA complex, ENY2, ATXN7, ATXN7L3, and USP22 form an additional subcomplex of SAGA called the DUB module (deubiquitination module). Interacts directly with ENY2 and USP22.

It localises to the nucleus. In terms of biological role, component of the transcription regulatory histone acetylation (HAT) complex SAGA, a multiprotein complex that activates transcription by remodeling chromatin and mediating histone acetylation and deubiquitination. Within the SAGA complex, participates in a subcomplex that specifically deubiquitinates both histones H2A and H2B. The SAGA complex is recruited to specific gene promoters by activators such as MYC, where it is required for transcription. Required for nuclear receptor-mediated transactivation. Within the complex, it is required to recruit USP22 and ENY2 into the SAGA complex. Regulates H2B monoubiquitination (H2Bub1) levels. Affects subcellular distribution of ENY2, USP22 and ATXN7L3B. This is Ataxin-7-like protein 3 (Atxn7l3) from Mus musculus (Mouse).